A 387-amino-acid chain; its full sequence is Large ribosomal subunit protein uL3 (387 aa).

Belongs to the universal ribosomal protein uL3 family.

The protein resides in the cytoplasm. This chain is Large ribosomal subunit protein uL3 (RPL3), found in Kluyveromyces lactis (strain ATCC 8585 / CBS 2359 / DSM 70799 / NBRC 1267 / NRRL Y-1140 / WM37) (Yeast).